A 146-amino-acid polypeptide reads, in one-letter code: MKLVNFLKKLRNEQVTIELKNGTTVWGTLQSVSPQMNAILTDVKLTLPQPRLNKLNSNGIAMASLYLTGGQQPTASDNIASLQYINIRGNTIRQIILPDSLNLDSLLVDQKQLNSLRRSGQIANDPSKKRRRDFGAPANKRPRRGL.

A Sm domain is found at 2 to 101 (KLVNFLKKLR…IRQIILPDSL (100 aa)). The disordered stretch occupies residues 118–146 (RSGQIANDPSKKRRRDFGAPANKRPRRGL). Positions 128 to 144 (KKRRRDFGAPANKRPRR) match the Nuclear localization signal motif.

It belongs to the snRNP core protein family. Component of the Sm core complex, present in spliceosomal snRNP U1, U2, U4/U6 and U5. The core complex contains SMB1, SMD1, SMD2, SMD3, SME1, SMX3 and SMX2 (Sm proteins B, D1, D2, D3, E, F and G, respectively), and is probably a heptameric ring structure. Belongs to the CWC complex (or CEF1-associated complex), a spliceosome sub-complex reminiscent of a late-stage spliceosome composed of the U2, U5 and U6 snRNAs and at least BUD13, BUD31, BRR2, CDC40, CEF1, CLF1, CUS1, CWC2, CWC15, CWC21, CWC22, CWC23, CWC24, CWC25, CWC27, ECM2, HSH155, IST3, ISY1, LEA1, MSL1, NTC20, PRP8, PRP9, PRP11, PRP19, PRP21, PRP22, PRP45, PRP46, SLU7, SMB1, SMD1, SMD2, SMD3, SMX2, SMX3, SNT309, SNU114, SPP2, SYF1, SYF2, RSE1 and YJU2. Component of the U4/U6-U5 tri-snRNP complex composed of the U4, U6 and U5 snRNAs and at least PRP3, PRP4, PRP6, PRP8, PRP18, PRP31, PRP38, SNU13, SNU23, SNU66, SNU114, SPP381, SMB1, SMD1, SMD2, SMD3, SMX2, SMX3, LSM2, LSM3, LSM4, LSM5, LSM6, LSM7, LSM8, BRR2 and DIB1.

The protein localises to the nucleus. It localises to the cytoplasm. Lays a role in pre-mRNA splicing as a core component of the spliceosomal U1, U2, U4 and U5 small nuclear ribonucleoproteins (snRNPs), the building blocks of the spliceosome. Also binds telomerase RNA and is required for its accumulation. This Saccharomyces cerevisiae (strain ATCC 204508 / S288c) (Baker's yeast) protein is Small nuclear ribonucleoprotein Sm D1 (SMD1).